The following is a 157-amino-acid chain: S-ribosylhomocysteine lyase (157 aa).

The Fe cation site is built by H54, H58, and C126.

It belongs to the LuxS family. As to quaternary structure, homodimer. It depends on Fe cation as a cofactor.

The catalysed reaction is S-(5-deoxy-D-ribos-5-yl)-L-homocysteine = (S)-4,5-dihydroxypentane-2,3-dione + L-homocysteine. Involved in the synthesis of autoinducer 2 (AI-2) which is secreted by bacteria and is used to communicate both the cell density and the metabolic potential of the environment. The regulation of gene expression in response to changes in cell density is called quorum sensing. Catalyzes the transformation of S-ribosylhomocysteine (RHC) to homocysteine (HC) and 4,5-dihydroxy-2,3-pentadione (DPD). This chain is S-ribosylhomocysteine lyase, found in Bacillus anthracis (strain A0248).